A 196-amino-acid chain; its full sequence is GTP cyclohydrolase-2 (196 aa).

49-53 (RIHSE) contacts GTP. Cys54, Cys65, and Cys67 together coordinate Zn(2+). Residues Gln70, 92–94 (EGR), and Thr114 contribute to the GTP site. The active-site Proton acceptor is the Asp126. Arg128 functions as the Nucleophile in the catalytic mechanism. 2 residues coordinate GTP: Thr149 and Lys154.

The protein belongs to the GTP cyclohydrolase II family. As to quaternary structure, homodimer. Zn(2+) serves as cofactor.

It catalyses the reaction GTP + 4 H2O = 2,5-diamino-6-hydroxy-4-(5-phosphoribosylamino)-pyrimidine + formate + 2 phosphate + 3 H(+). The protein operates within cofactor biosynthesis; riboflavin biosynthesis; 5-amino-6-(D-ribitylamino)uracil from GTP: step 1/4. Functionally, catalyzes the conversion of GTP to 2,5-diamino-6-ribosylamino-4(3H)-pyrimidinone 5'-phosphate (DARP), formate and pyrophosphate. This is GTP cyclohydrolase-2 from Buchnera aphidicola subsp. Schizaphis graminum (strain Sg).